A 2315-amino-acid chain; its full sequence is Receptor-type tyrosine-protein phosphatase zeta (2315 aa).

The first 24 residues, 1 to 24, serve as a signal peptide directing secretion; sequence MRILKRFLACIQLLCVCRLDWANG. The Extracellular segment spans residues 25–1636; sequence YYRQQRKLVE…LAEGLESEKK (1612 aa). An Alpha-carbonic anhydrase domain is found at 36–300; sequence IGWSYTGALN…KFSRQVFSSY (265 aa). 2 disulfides stabilise this stretch: C56-C240 and C133-C264. Residues N105, N134, N223, N232, N324, and N381 are each glycosylated (N-linked (GlcNAc...) asparagine). The 100-residue stretch at 314 to 413 folds into the Fibronectin type-III domain; that stretch reads EPENVQADPE…LIVDMPTDNP (100 aa). Disordered regions lie at residues 442–462 and 477–507; these read IVNPGRDSATNQIRKKEPQIS and AKTNRSPTRGSEFSGKGDVPNTSLNSTSQPV. Positions 496–507 are enriched in polar residues; the sequence is PNTSLNSTSQPV. 3 N-linked (GlcNAc...) asparagine glycosylation sites follow: N497, N501, and N552. S587 carries an O-linked (Xyl...) (chondroitin sulfate) serine glycan. N-linked (GlcNAc...) asparagine glycans are attached at residues N602 and N629. Residues 628–650 form a disordered region; it reads RNASEDSTSSGSEESLKDPSMEG. Residue S637 is modified to Phosphoserine; alternate. S637 carries an O-linked (Xyl...) (chondroitin sulfate) serine; alternate glycan. S639 bears the Phosphoserine mark. The N-linked (GlcNAc...) asparagine glycan is linked to N677. O-linked (Xyl...) (chondroitin sulfate) serine glycosylation is present at S997. 4 N-linked (GlcNAc...) asparagine glycosylation sites follow: N1017, N1050, N1082, and N1122. A compositionally biased stretch (polar residues) spans 1123–1138; it reads FSVQPTHTVSQASGDT. Disordered stretches follow at residues 1123-1160, 1397-1523, 1543-1572, and 1584-1621; these read FSVQPTHTVSQASGDTSLKPVLSANSEPASSDPASSEM, KATS…EEND, LTSDEESGSGQGTSDSLNENETSTDFSFAD, and AGDSEITPGFPQSPTSSVTSENSEVFHVSEAEASNSSH. Residues 1145–1159 show a composition bias toward low complexity; the sequence is SANSEPASSDPASSE. The span at 1417 to 1432 shows a compositional bias: acidic residues; it reads EDGDTDDDGDDDDDDR. The segment covering 1450–1465 has biased composition (basic and acidic residues); that stretch reads ESQEKVMNDSDTHENS. The N-linked (GlcNAc...) asparagine glycan is linked to N1457. Composition is skewed to polar residues over residues 1466–1479 and 1487–1513; these read LMDQNNPISYSLSE and VTSVSSDSQTGMDRSPGKSPSANGLSQ. 2 O-linked (Xyl...) (chondroitin sulfate) serine glycosylation sites follow: S1549 and S1551. Composition is skewed to polar residues over residues 1554-1572 and 1593-1606; these read GTSDSLNENETSTDFSFAD and FPQSPTSSVTSENS. N-linked (GlcNAc...) asparagine glycosylation is present at N1562. N-linked (GlcNAc...) asparagine glycosylation occurs at N1618. The chain crosses the membrane as a helical span at residues 1637–1662; the sequence is AVIPLVIVSALTFICLVVLVGILIYW. Residues 1663-2315 are Cytoplasmic-facing; the sequence is RKCFQTAHFY…NIAESLESLV (653 aa). Phosphothreonine is present on residues T1684 and T1687. 2 consecutive Tyrosine-protein phosphatase domains span residues 1717–1992 and 2023–2282; these read FTEE…LVEA and LEKQ…ILSL. Residues D1901, 1933-1939, and Q1977 contribute to the substrate site; that span reads CSAGVGR. C1933 (phosphocysteine intermediate) is an active-site residue. S2055 is subject to Phosphoserine.

Belongs to the protein-tyrosine phosphatase family. Receptor class 5 subfamily. In terms of assembly, the carbonic-anhydrase like domain interacts with CNTN1 (contactin). Interacts with PTN. Interaction with PTN promotes formation of homooligomers; oligomerization impairs phosphatase activity. Interacts (via chondroitin sulfate chains) with MDK (via C-terminal); this interaction is inhibited by PTN; this interaction promotes neuronal migration. As to expression, specifically expressed in the central nervous system, where it is localized in the Purkinje cell layer of the cerebellum, the dentate gyrus, and the subependymal layer of the anterior horn of the lateral ventricle. Developmentally regulated in the brain.

It localises to the cell membrane. The protein resides in the secreted. It carries out the reaction O-phospho-L-tyrosyl-[protein] + H2O = L-tyrosyl-[protein] + phosphate. Functionally, protein tyrosine phosphatase that negatively regulates oligodendrocyte precursor proliferation in the embryonic spinal cord. Required for normal differentiation of the precursor cells into mature, fully myelinating oligodendrocytes. May play a role in protecting oligondendrocytes against apoptosis. May play a role in the establishment of contextual memory, probably via the dephosphorylation of proteins that are part of important signaling cascades. In Homo sapiens (Human), this protein is Receptor-type tyrosine-protein phosphatase zeta (PTPRZ1).